Consider the following 433-residue polypeptide: Serine hydroxymethyltransferase (433 aa).

Position 121-123 (121-123 (AHV)) interacts with (6S)-5,6,7,8-tetrahydrofolate. An N6-(pyridoxal phosphate)lysine modification is found at Lys227. Glu243 contributes to the (6S)-5,6,7,8-tetrahydrofolate binding site.

The protein belongs to the SHMT family. As to quaternary structure, homodimer. Pyridoxal 5'-phosphate serves as cofactor.

It is found in the cytoplasm. It functions in the pathway amino-acid biosynthesis; glycine biosynthesis; glycine from L-serine: step 1/1. In terms of biological role, catalyzes the reversible interconversion of serine and glycine with a modified folate serving as the one-carbon carrier. Also exhibits a pteridine-independent aldolase activity toward beta-hydroxyamino acids, producing glycine and aldehydes, via a retro-aldol mechanism. The sequence is that of Serine hydroxymethyltransferase from Saccharolobus islandicus (strain L.S.2.15 / Lassen #1) (Sulfolobus islandicus).